The following is a 495-amino-acid chain: uncharacterized protein (495 aa).

A CHY-type zinc finger spans residues 389-457 (PLPNNGACEH…KDATCPHCGN (69 aa)). The Zn(2+) site is built by Cys-396, His-398, Cys-410, Cys-411, Cys-417, Cys-420, His-421, His-427, Cys-437, Cys-440, Cys-452, and Cys-455. Basic and acidic residues predominate over residues 473-483 (GMRDRVRMSRK). The interval 473-495 (GMRDRVRMSRKDPRKYKRKHHGN) is disordered. Over residues 484–495 (DPRKYKRKHHGN) the composition is skewed to basic residues.

The protein resides in the cytoplasm. This is an uncharacterized protein from Schizosaccharomyces pombe (strain 972 / ATCC 24843) (Fission yeast).